The sequence spans 1418 residues: Ankyrin repeat and fibronectin type-III domain-containing protein 1 (1418 aa).

A disordered region spans residues 119-236; it reads RDSVCSLPPP…DRGETPSLSE (118 aa). The segment covering 144 to 154 has biased composition (polar residues); it reads PENTSINLSQC. The segment covering 171–186 has biased composition (low complexity); it reads SASPTSSTPLRTTSTP. Residues 223-236 are compositionally biased toward basic and acidic residues; it reads LRDHDRGETPSLSE. 2 ANK repeats span residues 419–450 and 456–485; these read QSSEALFEAVEQQDLDAVQILLFQYTADELDL and EGLTPLDISIMTNNVPIAKLLLKAGGKESP. Residues 556–652 form the Fibronectin type-III domain; it reads APLMVRLSVT…LSQPPSAVPS (97 aa). The highly conserved peptide sequence stretch occupies residues 893-900; it reads GLYLGYLK. 3 disordered regions span residues 1134–1179, 1321–1343, and 1361–1418; these read VQKN…EVFL, LETPLSIPHSPTTSYSLDEYRQP, and KTSP…SSTL. The segment covering 1136-1146 has biased composition (polar residues); sequence KNDSTSSNTDY. A compositionally biased stretch (polar residues) spans 1407–1418; sequence NEQVSEILSSTL.

Required for vestibular-related functions. This is Ankyrin repeat and fibronectin type-III domain-containing protein 1 (ankfn1) from Danio rerio (Zebrafish).